Reading from the N-terminus, the 105-residue chain is Urease subunit beta (105 aa).

This sequence belongs to the urease beta subunit family. Heterotrimer of UreA (gamma), UreB (beta) and UreC (alpha) subunits. Three heterotrimers associate to form the active enzyme.

It localises to the cytoplasm. It carries out the reaction urea + 2 H2O + H(+) = hydrogencarbonate + 2 NH4(+). The protein operates within nitrogen metabolism; urea degradation; CO(2) and NH(3) from urea (urease route): step 1/1. This is Urease subunit beta from Prochlorococcus marinus (strain MIT 9313).